The chain runs to 584 residues: Cilia- and flagella-associated protein 184 (584 aa).

Basic and acidic residues-rich tracts occupy residues 1-18 (MDSHYGDIEGKDRAEEGL), 42-57 (PEPKPEPEPTQGREPE), and 67-82 (SKAKDSEGIDYAHVEV). Residues 1-243 (MDSHYGDIEG…ASTEEFEWTA (243 aa)) form a disordered region. Residues 119–146 (DKDEDEDEDEDEDEDEDEDEDEDEDEGE) show a composition bias toward acidic residues. Basic and acidic residues predominate over residues 189–232 (AKEKARESLKKRDSEEIEGTDRERHKSTEEQLHPGEAKEEEKQK). 2 coiled-coil regions span residues 317–470 (LAML…SNVQ) and 530–561 (LLGKESLLRDLEEKVEKTEMLNRRLESLKRHH).

It belongs to the CFAP184 family. In terms of assembly, forms a complex with CFAP263; the interaction is required for functional activity in cilia.

The protein localises to the cell projection. It localises to the cilium. It is found in the cytoplasm. Its subcellular location is the cytoskeleton. The protein resides in the microtubule organizing center. The protein localises to the centrosome. In terms of biological role, in complex with CFAP263, acts as a regulator of ciliary beating that connects radial spoke 3 (RS3) to the inner dynein arm (IDA) and the nexin-dynein regulatory complex (N-DRC). The complex is positioned parallel to N-DRC and forms a connection between the arch at the base of RS3, the IDA tail and N-DRC. In Mus musculus (Mouse), this protein is Cilia- and flagella-associated protein 184 (Cfap184).